Reading from the N-terminus, the 338-residue chain is Ketol-acid reductoisomerase (NADP(+)) (338 aa).

Positions 1-181 constitute a KARI N-terminal Rossmann domain; the sequence is MKVYYDSDAD…GGGRAGIIET (181 aa). Residues 24 to 27, Arg-47, Ser-50, Ser-52, and 82 to 85 contribute to the NADP(+) site; these read YGSQ and DEHQ. His-107 is an active-site residue. NADP(+) is bound at residue Gly-133. Residues 182 to 327 form the KARI C-terminal knotted domain; that stretch reads SFKEETETDL…AKLRAMMPWI (146 aa). Residues Asp-190, Glu-194, Glu-226, and Glu-230 each coordinate Mg(2+). A substrate-binding site is contributed by Ser-251.

This sequence belongs to the ketol-acid reductoisomerase family. It depends on Mg(2+) as a cofactor.

It carries out the reaction (2R)-2,3-dihydroxy-3-methylbutanoate + NADP(+) = (2S)-2-acetolactate + NADPH + H(+). It catalyses the reaction (2R,3R)-2,3-dihydroxy-3-methylpentanoate + NADP(+) = (S)-2-ethyl-2-hydroxy-3-oxobutanoate + NADPH + H(+). The protein operates within amino-acid biosynthesis; L-isoleucine biosynthesis; L-isoleucine from 2-oxobutanoate: step 2/4. Its pathway is amino-acid biosynthesis; L-valine biosynthesis; L-valine from pyruvate: step 2/4. Involved in the biosynthesis of branched-chain amino acids (BCAA). Catalyzes an alkyl-migration followed by a ketol-acid reduction of (S)-2-acetolactate (S2AL) to yield (R)-2,3-dihydroxy-isovalerate. In the isomerase reaction, S2AL is rearranged via a Mg-dependent methyl migration to produce 3-hydroxy-3-methyl-2-ketobutyrate (HMKB). In the reductase reaction, this 2-ketoacid undergoes a metal-dependent reduction by NADPH to yield (R)-2,3-dihydroxy-isovalerate. This Magnetococcus marinus (strain ATCC BAA-1437 / JCM 17883 / MC-1) protein is Ketol-acid reductoisomerase (NADP(+)).